Consider the following 148-residue polypeptide: Cystatin-C (148 aa).

An N-terminal signal peptide occupies residues 1–30; that stretch reads MVGSPRAPLLLLASLIVALALALAVSPAAA. Gln31 is subject to Pyrrolidone carboxylic acid. The Secondary area of contact motif lies at 84-88; the sequence is QVVSG. Intrachain disulfides connect Cys102/Cys112 and Cys126/Cys146.

It is found in the secreted. This is a thiol proteinase inhibitor. The polypeptide is Cystatin-C (CST3) (Bos taurus (Bovine)).